The following is a 652-amino-acid chain: Putative asparagine synthetase [glutamine-hydrolyzing] (652 aa).

The active-site For GATase activity is the C2. The Glutamine amidotransferase type-2 domain occupies 2-231; sequence CGLLAFVAAP…SGCFARIRAD (230 aa). L-glutamine is bound by residues 60–64, 89–91, and D115; these read RLSII and NGE. 382-383 contributes to the ATP binding site; it reads SG.

It belongs to the asparagine synthetase family.

It carries out the reaction L-aspartate + L-glutamine + ATP + H2O = L-asparagine + L-glutamate + AMP + diphosphate + H(+). It functions in the pathway amino-acid biosynthesis; L-asparagine biosynthesis; L-asparagine from L-aspartate (L-Gln route): step 1/1. The sequence is that of Putative asparagine synthetase [glutamine-hydrolyzing] (asnB) from Mycobacterium bovis (strain ATCC BAA-935 / AF2122/97).